A 588-amino-acid chain; its full sequence is Protein disulfide-isomerase-like protein of the testis (588 aa).

A signal peptide spans 1–20 (MELLWTPLLLVAACLSEVLG). N55, N157, and N337 each carry an N-linked (GlcNAc...) asparagine glycan. The Thioredoxin domain maps to 385–448 (PVKKLVGKNF…IAKIDITAND (64 aa)). 3 stretches are compositionally biased toward basic and acidic residues: residues 531–542 (IEDTSKQDRPVK), 549–567 (SIRK…EREA), and 574–588 (EQPK…KEEL). Residues 531 to 588 (IEDTSKQDRPVKESPVLDSIRKPEEPERRKETAEREAAAAQPKEQPKPERKLEVKEEL) form a disordered region. A Prevents secretion from ER motif is present at residues 585–588 (KEEL).

It belongs to the protein disulfide isomerase family. As to quaternary structure, homodimer. The homodimer is not disulfide-linked. Interacts with CLGN and ERO1A. N-glycosylated. In terms of tissue distribution, testis-specific (at protein level).

It localises to the endoplasmic reticulum. Its function is as follows. Probable redox-inactive chaperone involved in spermatogenesis. This is Protein disulfide-isomerase-like protein of the testis (Pdilt) from Mus musculus (Mouse).